The primary structure comprises 418 residues: Queuine tRNA-ribosyltransferase accessory subunit 2 (418 aa).

Residues cysteine 325, cysteine 327, cysteine 330, and histidine 356 each contribute to the Zn(2+) site.

It belongs to the queuine tRNA-ribosyltransferase family. QTRT2 subfamily. As to quaternary structure, heterodimer of a catalytic subunit and an accessory subunit. The cofactor is Zn(2+).

The protein localises to the cytoplasm. Non-catalytic subunit of the queuine tRNA-ribosyltransferase (TGT) that catalyzes the base-exchange of a guanine (G) residue with queuine (Q) at position 34 (anticodon wobble position) in tRNAs with GU(N) anticodons (tRNA-Asp, -Asn, -His and -Tyr), resulting in the hypermodified nucleoside queuosine (7-(((4,5-cis-dihydroxy-2-cyclopenten-1-yl)amino)methyl)-7-deazaguanosine). The polypeptide is Queuine tRNA-ribosyltransferase accessory subunit 2 (Drosophila erecta (Fruit fly)).